Here is a 1067-residue protein sequence, read N- to C-terminus: MITRLSGACLRRSGAKRNWPREHLVHRSLLASFSTTQRVLKCSVGPFRTSNVVFKSKEPKDNKPLDNKNDPKKTHNEDESHTNESLPSTDKKKKKDNDDFKQNLKSSSNKTEEKYSATQASKSKNDEFELGGEENEDEMPLNGEFNKNVPAKYSVPDVYPQLLALPIARRPLFPGFYKAIVTKNPSVSEAIKELIKKRQPYIGAFLLKDENTDTDVITNIDQVYPVGVFAQITSIFPAKSGSEPALTAVLYPHRRIRITELIPPKEDADSAASSDAAELETDKSSNLSSNGEVKSDLKQDNGKEEPEKEVESTPSILQNFKVSLVNVENVPNEPFKRQDPVIKAVTSEIMNVFKDIANVSPLFREQIANFSISQTSGNVFDEPAKLADFAAAVSAADHRELQEVLEATNIGDRLQKALYVLKKELLNAQLQHKINKEIEQKITQRHKEYLLTEQLKQIKRELGQELDSKEALVTEFKKRTESLSMPDHVKKVFNDELSKFQHLEPMAAEFNITRNYLDWITQLPWGKRSVENFDLDHAKEVLDRDHYGLKDVKDRVLELVAVGKLRGTMQGKIMCLVGPPGVGKTSVGKSIASALNREFFRFSVGGLTDVAEIKGHRRTYIGAMPGKIVQALKKVQTENPLILIDEIDKVGKSHQGDPASALLELLDSEQNSAFLDYYMDIPLDVSSVLFVCTANTIDTIPPPLLDRMEVIELSGYVSAEKVNIAKGYLIPQAKAACGLKDANVNISDDAIKGLISYYAHESGVRNLKKSIEKIFRKTSFSIVKEIDDELNSKEKSTGKSGKKTSPQSSEDAANKEASSVPLKVPDKVNIEIEEKDLTKYLGPPIYTSQRLYDTTPPGVVMGLGWTPMGGVSMYVETIVKNILSSNSTPSLERTGQLGDVMKESSEISYSFSKSFLSKHFPNNKFFEHARLHMHCPEGSISKDGPSAGITMATSLLSLALDTPVPATTAMTGELTLTGKILRIGGLREKTVAAKLSGMKEILFPKSNLADWEQLPDYVKEGLTGVPVAWYDDVFKRVFSNIDAEKCNNLWPNLIKSSSKQHQISPSH.

A mitochondrion-targeting transit peptide spans 1-36; the sequence is MITRLSGACLRRSGAKRNWPREHLVHRSLLASFSTT. Over residues 55 to 82 the composition is skewed to basic and acidic residues; the sequence is KSKEPKDNKPLDNKNDPKKTHNEDESHT. Disordered regions lie at residues 55-142 and 262-314; these read KSKE…MPLN and IPPK…ESTP. A compositionally biased stretch (acidic residues) spans 128–139; it reads FELGGEENEDEM. Positions 162–425 constitute a Lon N-terminal domain; that stretch reads LLALPIARRP…KALYVLKKEL (264 aa). Positions 293 to 311 are enriched in basic and acidic residues; the sequence is VKSDLKQDNGKEEPEKEVE. ATP is bound at residue 578–585; it reads GPPGVGKT. A disordered region spans residues 791-820; the sequence is NSKEKSTGKSGKKTSPQSSEDAANKEASSV. The Lon proteolytic domain maps to 854–1040; sequence TTPPGVVMGL…DDVFKRVFSN (187 aa). Residues Ser946 and Lys989 contribute to the active site.

Belongs to the peptidase S16 family. Homohexamer or homoheptamer. Organized in a ring with a central cavity.

It localises to the mitochondrion matrix. The catalysed reaction is Hydrolysis of proteins in presence of ATP.. Functionally, ATP-dependent serine protease that mediates the selective degradation of misfolded, unassembled or oxidatively damaged polypeptides as well as certain short-lived regulatory proteins in the mitochondrial matrix. May also have a chaperone function in the assembly of inner membrane protein complexes. Participates in the regulation of mitochondrial gene expression and in the maintenance of the integrity of the mitochondrial genome. Binds to mitochondrial DNA in a site-specific manner. The polypeptide is Lon protease homolog, mitochondrial (pim1) (Schizosaccharomyces pombe (strain 972 / ATCC 24843) (Fission yeast)).